The chain runs to 315 residues: MTDSANNRPPRLPRREVHGVLLLDKPLGLSSNDALVRAKRLLRALKAGHTGTLDPLATGLLPLCFGEATKFSQDLLDADKTYEAVVRLGQKTTTGDAEGEVVVERPVSCDRAGLDAAIARFLGEIDQVPPMHSALKKDGRPLYEYARAGQTVERPARRVTIHAIDVLDCALPLAPSFTMRVKCSKGTYIRTLAEDIGEALGCGAHLTGLRRIAVGDLTLDGAVTLDQIDAQADEARPAMLAPVDALLRRCPPVTLSAEAMSRFLQGQRLAYRDLDPDSAPQEGVLARVYGGEPPKLLGVARMREGALRPERLVRL.

The active-site Nucleophile is Asp-54.

Belongs to the pseudouridine synthase TruB family. Type 1 subfamily.

It carries out the reaction uridine(55) in tRNA = pseudouridine(55) in tRNA. Responsible for synthesis of pseudouridine from uracil-55 in the psi GC loop of transfer RNAs. The chain is tRNA pseudouridine synthase B from Cupriavidus pinatubonensis (strain JMP 134 / LMG 1197) (Cupriavidus necator (strain JMP 134)).